The following is a 315-amino-acid chain: Deoxyhypusine hydroxylase (315 aa).

HEAT-like PBS-type repeat units follow at residues 23–52 (IAKRFRSLFTLRNLNGPLCIDAMASALNDK), 56–82 (LRHEIAYCLGQMEDEYALKVLIDLVKN), 89–115 (VRHEAAEALGAIGSESAHKTLKEYSND), 179–205 (NRYRALFSLRDIGDEQSVLALCDGLKD), 211–237 (LRHEVAFVLGQLQHRVAIDPLTTCVLD), and 244–270 (VRHEAAEALGAIASTETIPLLEKLLQD). Residues His58, His91, and Glu92 each coordinate Fe cation. Fe cation contacts are provided by His213, His246, and Glu247.

Belongs to the deoxyhypusine hydroxylase family. The cofactor is Fe(2+).

It carries out the reaction [eIF5A protein]-deoxyhypusine + AH2 + O2 = [eIF5A protein]-hypusine + A + H2O. It functions in the pathway protein modification; eIF5A hypusination. Catalyzes the hydroxylation of the N(6)-(4-aminobutyl)-L-lysine intermediate produced by deoxyhypusine synthase/DHPS on a critical lysine of the eukaryotic translation initiation factor 5A/eIF-5A. This is the second step of the post-translational modification of that lysine into an unusual amino acid residue named hypusine. Hypusination is unique to mature eIF-5A factor and is essential for its function. The polypeptide is Deoxyhypusine hydroxylase (dohh-1) (Dictyostelium discoideum (Social amoeba)).